We begin with the raw amino-acid sequence, 505 residues long: MLFLNAKFIDLDLGESAVIVNEEDLKGTSYYPQDRVLIESHAGSVIGNIYSTKTMVQKGEVGMLVSELSEISISEGEEVKLRHAEKPESIPFIKKKMDGQVLNPHEIRTIIDEIVSKKLSNIELSAFVSSTYINGMNMDEISEMTKRIAETGDMISWEKSLVVDIHSIGGVPGNKYALLSIPILAAAGITVPKTSSRAITSPAGTADVMEVLTNVELKEEEIKRIVKTTNGCLAWGGGVNLAPADDIIINVERPVSIDPQPQLLASVMAKKIATGIKYTVIDIPVGKGVKIKNEAEGAKLARKFIELGEMLNIKVECVLTYGGQPLGRAIGPALEAKEAIESLQDPKNAPKSLIEKSLSLAGILLELGGAAQIGEGQNLAWEILESGKALEKFNQIIVEQGGTPKKPEEIELGEYVEEILAPIDGYITDISNTAITNVVKEAGAPRDKKAGILLNSKIGNKVTQGDVLYTIYSGSEERLISAVNLARRVYPVKVEGMLIERISKF.

Residues G170, 196–201 (SRAITS), and T205 contribute to the AMP site. Catalysis depends on D258, which acts as the Proton donor. AMP contacts are provided by S266 and K290.

It belongs to the thymidine/pyrimidine-nucleoside phosphorylase family. Type 2 subfamily.

The enzyme catalyses AMP + phosphate = alpha-D-ribose 1,5-bisphosphate + adenine. It carries out the reaction CMP + phosphate = cytosine + alpha-D-ribose 1,5-bisphosphate. The catalysed reaction is UMP + phosphate = alpha-D-ribose 1,5-bisphosphate + uracil. In terms of biological role, catalyzes the conversion of AMP and phosphate to adenine and ribose 1,5-bisphosphate (R15P). Exhibits phosphorylase activity toward CMP and UMP in addition to AMP. Functions in an archaeal AMP degradation pathway, together with R15P isomerase and RubisCO. In Methanococcus maripaludis (strain C7 / ATCC BAA-1331), this protein is AMP phosphorylase.